The following is a 320-amino-acid chain: Putative HTH-type transcriptional regulatory protein VNG_2112C (320 aa).

The HTH cro/C1-type domain occupies 132–189 (LADRREDERLSLGQLASELGVSRRTVSKYEDGMNASIEVAMRLEDLFGGELTAPVDVM). The segment at residues 143-162 (LGQLASELGVSRRTVSKYED) is a DNA-binding region (H-T-H motif).

This Halobacterium salinarum (strain ATCC 700922 / JCM 11081 / NRC-1) (Halobacterium halobium) protein is Putative HTH-type transcriptional regulatory protein VNG_2112C.